We begin with the raw amino-acid sequence, 148 residues long: Cofilin/actin-depolymerizing factor homolog (148 aa).

In terms of domain architecture, ADF-H spans 4-143; the sequence is GVTVSDVCKT…SREAVEEKLR (140 aa). The Nuclear localization signal motif lies at 19–23; the sequence is KKDKK.

The protein belongs to the actin-binding proteins ADF family. Post-translationally, phosphorylated in vitro by protein kinase LIMK1. Phosphorylation is required for inactivation of tsr and for cell proliferation and axon growth. Phosphorylation is negatively regulated by the panthothenate kinase fbl which catalyzes the first step in the conversion of panthothenic acid to coenzyme A. In terms of processing, dephosphorylated by protein phosphatase ssh which activates tsr.

It localises to the cytoplasm. The protein resides in the cytoskeleton. It is found in the nucleus matrix. Its function is as follows. Exhibits F-actin depolymerizing activity and regulates actin cytoskeleton dynamics. Required for cytokinesis in both mitotic and meiotic cells and for aster migration and separation. Promotes cell motility during ovary development and oogenesis. During larval development, required for the cell rearrangement needed for formation of terminal filaments which are stacks of somatic cells that are important for the initiation of ovarioles. Also required for border cell migration during oogenesis. During border cell migration, required for actin turnover and lamellipodial protrusion. Required for the establishment of planar cell polarity (PCP) where cells adopt a uniform orientation within the plane of an epithelium. During establishment of PCP, required for the redistribution of the PCP core proteins fz and stan/fmi to the proximodistal cell boundary. During pupal development, required for elongation of the retinal cell body and for rhabdomere morphogenesis. Required for mushroom body neuroblast proliferation and axon growth. Plays a role in the positive regulation of protein secretion. Plays a role in the regulation of nuclear localization of actin. Required for the maintenance of epithelial integrity by controlling cell junctions and is also necessary for cell survival and tissue growth through regulation of JNK and yki signaling. The protein is Cofilin/actin-depolymerizing factor homolog of Drosophila melanogaster (Fruit fly).